A 350-amino-acid polypeptide reads, in one-letter code: Phenylalanine--tRNA ligase alpha subunit (350 aa).

Position 259 (E259) interacts with Mg(2+).

The protein belongs to the class-II aminoacyl-tRNA synthetase family. Phe-tRNA synthetase alpha subunit type 1 subfamily. In terms of assembly, tetramer of two alpha and two beta subunits. It depends on Mg(2+) as a cofactor.

It is found in the cytoplasm. It catalyses the reaction tRNA(Phe) + L-phenylalanine + ATP = L-phenylalanyl-tRNA(Phe) + AMP + diphosphate + H(+). The sequence is that of Phenylalanine--tRNA ligase alpha subunit (pheS) from Rickettsia prowazekii (strain Madrid E).